The primary structure comprises 552 residues: Chaperonin GroEL (552 aa).

Residues 30–33 (TLGP), Lys51, 87–91 (DGTTT), Gly415, and Asp496 each bind ATP.

It belongs to the chaperonin (HSP60) family. In terms of assembly, forms a cylinder of 14 subunits composed of two heptameric rings stacked back-to-back. Interacts with the co-chaperonin GroES.

Its subcellular location is the cytoplasm. It catalyses the reaction ATP + H2O + a folded polypeptide = ADP + phosphate + an unfolded polypeptide.. Together with its co-chaperonin GroES, plays an essential role in assisting protein folding. The GroEL-GroES system forms a nano-cage that allows encapsulation of the non-native substrate proteins and provides a physical environment optimized to promote and accelerate protein folding. The sequence is that of Chaperonin GroEL from Paramagnetospirillum magneticum (strain ATCC 700264 / AMB-1) (Magnetospirillum magneticum).